A 715-amino-acid polypeptide reads, in one-letter code: Polyribonucleotide nucleotidyltransferase (715 aa).

Residues D498 and D504 each contribute to the Mg(2+) site. Residues 565–625 (PKVCMMQIKP…ETVKKTVAFI (61 aa)) enclose the KH domain. The S1 motif domain occupies 635-709 (GTCYQASILR…RIDFLLLPKK (75 aa)).

This sequence belongs to the polyribonucleotide nucleotidyltransferase family. Requires Mg(2+) as cofactor.

The protein localises to the cytoplasm. It catalyses the reaction RNA(n+1) + phosphate = RNA(n) + a ribonucleoside 5'-diphosphate. Its function is as follows. Involved in mRNA degradation. Catalyzes the phosphorolysis of single-stranded polyribonucleotides processively in the 3'- to 5'-direction. This chain is Polyribonucleotide nucleotidyltransferase, found in Aster yellows witches'-broom phytoplasma (strain AYWB).